The primary structure comprises 230 residues: RNA chaperone ProQ (230 aa).

The span at 105–125 (EAKARVQAQREQHQAKKREAG) shows a compositional bias: basic and acidic residues. The interval 105–182 (EAKARVQAQR…EQRKPVTDTT (78 aa)) is disordered. Positions 154–167 (PSRPQAARPASAPR) are enriched in low complexity. Positions 168-178 (AESRVEQRKPV) are enriched in basic and acidic residues.

The protein belongs to the ProQ family.

It localises to the cytoplasm. In terms of biological role, RNA chaperone with significant RNA binding, RNA strand exchange and RNA duplexing activities. May regulate ProP activity through an RNA-based, post-transcriptional mechanism. The polypeptide is RNA chaperone ProQ (Erwinia tasmaniensis (strain DSM 17950 / CFBP 7177 / CIP 109463 / NCPPB 4357 / Et1/99)).